Reading from the N-terminus, the 209-residue chain is Probable glutathione peroxidase 8-B (209 aa).

Residues Val-18–Leu-40 traverse the membrane as a helical segment. Residue Cys-79 is part of the active site.

It belongs to the glutathione peroxidase family.

It is found in the membrane. The catalysed reaction is 2 glutathione + H2O2 = glutathione disulfide + 2 H2O. This chain is Probable glutathione peroxidase 8-B (gpx8-b), found in Xenopus laevis (African clawed frog).